The sequence spans 435 residues: D-amino acid dehydrogenase (435 aa).

3–17 (VLILGSGVIGTTSAW) contacts FAD.

The protein belongs to the DadA oxidoreductase family. FAD is required as a cofactor.

It catalyses the reaction a D-alpha-amino acid + A + H2O = a 2-oxocarboxylate + AH2 + NH4(+). It functions in the pathway amino-acid degradation; D-alanine degradation; NH(3) and pyruvate from D-alanine: step 1/1. Oxidative deamination of D-amino acids. The protein is D-amino acid dehydrogenase of Xylella fastidiosa (strain M23).